Here is a 118-residue protein sequence, read N- to C-terminus: Holo-[acyl-carrier-protein] synthase (118 aa).

Positions 9 and 52 each coordinate Mg(2+).

It belongs to the P-Pant transferase superfamily. AcpS family. It depends on Mg(2+) as a cofactor.

The protein localises to the cytoplasm. The catalysed reaction is apo-[ACP] + CoA = holo-[ACP] + adenosine 3',5'-bisphosphate + H(+). In terms of biological role, transfers the 4'-phosphopantetheine moiety from coenzyme A to a Ser of acyl-carrier-protein. The chain is Holo-[acyl-carrier-protein] synthase from Frankia casuarinae (strain DSM 45818 / CECT 9043 / HFP020203 / CcI3).